The sequence spans 235 residues: tRNA (guanine-N(1)-)-methyltransferase (235 aa).

S-adenosyl-L-methionine contacts are provided by residues G113 and 133–138; that span reads IGDYIL.

This sequence belongs to the RNA methyltransferase TrmD family. As to quaternary structure, homodimer.

The protein localises to the cytoplasm. The enzyme catalyses guanosine(37) in tRNA + S-adenosyl-L-methionine = N(1)-methylguanosine(37) in tRNA + S-adenosyl-L-homocysteine + H(+). In terms of biological role, specifically methylates guanosine-37 in various tRNAs. This chain is tRNA (guanine-N(1)-)-methyltransferase, found in Wolbachia sp. subsp. Brugia malayi (strain TRS).